A 294-amino-acid chain; its full sequence is Bifunctional protein FolD (294 aa).

NADP(+) is bound by residues 169–171, Thr-196, and Val-237; that span reads GRG.

Belongs to the tetrahydrofolate dehydrogenase/cyclohydrolase family. In terms of assembly, homodimer.

The catalysed reaction is (6R)-5,10-methylene-5,6,7,8-tetrahydrofolate + NADP(+) = (6R)-5,10-methenyltetrahydrofolate + NADPH. It carries out the reaction (6R)-5,10-methenyltetrahydrofolate + H2O = (6R)-10-formyltetrahydrofolate + H(+). It functions in the pathway one-carbon metabolism; tetrahydrofolate interconversion. Functionally, catalyzes the oxidation of 5,10-methylenetetrahydrofolate to 5,10-methenyltetrahydrofolate and then the hydrolysis of 5,10-methenyltetrahydrofolate to 10-formyltetrahydrofolate. In Renibacterium salmoninarum (strain ATCC 33209 / DSM 20767 / JCM 11484 / NBRC 15589 / NCIMB 2235), this protein is Bifunctional protein FolD.